Here is a 78-residue protein sequence, read N- to C-terminus: MPLPKIEDARKLNDEELVEEILAAKRQLFTLRFQKATNRLEKTHEFKHTRHRLAQLMTVERERQLQAQSAPSVTPEEE.

The protein belongs to the universal ribosomal protein uL29 family.

The chain is Large ribosomal subunit protein uL29 from Rippkaea orientalis (strain PCC 8801 / RF-1) (Cyanothece sp. (strain PCC 8801)).